Reading from the N-terminus, the 236-residue chain is Phosphoribosylaminoimidazole-succinocarboxamide synthase (236 aa).

Belongs to the SAICAR synthetase family.

It carries out the reaction 5-amino-1-(5-phospho-D-ribosyl)imidazole-4-carboxylate + L-aspartate + ATP = (2S)-2-[5-amino-1-(5-phospho-beta-D-ribosyl)imidazole-4-carboxamido]succinate + ADP + phosphate + 2 H(+). It participates in purine metabolism; IMP biosynthesis via de novo pathway; 5-amino-1-(5-phospho-D-ribosyl)imidazole-4-carboxamide from 5-amino-1-(5-phospho-D-ribosyl)imidazole-4-carboxylate: step 1/2. The protein is Phosphoribosylaminoimidazole-succinocarboxamide synthase of Chlorobium phaeobacteroides (strain BS1).